A 207-amino-acid chain; its full sequence is Small ribosomal subunit protein uS4 (207 aa).

Residues 98–164 (RRLDNVVYRM…AKFKNLVEVN (67 aa)) enclose the S4 RNA-binding domain.

This sequence belongs to the universal ribosomal protein uS4 family. As to quaternary structure, part of the 30S ribosomal subunit. Contacts protein S5. The interaction surface between S4 and S5 is involved in control of translational fidelity.

One of the primary rRNA binding proteins, it binds directly to 16S rRNA where it nucleates assembly of the body of the 30S subunit. Functionally, with S5 and S12 plays an important role in translational accuracy. This is Small ribosomal subunit protein uS4 from Clostridioides difficile (strain 630) (Peptoclostridium difficile).